The following is a 706-amino-acid chain: MKSIILFVLSLLLILEKQAAVMGQKGGSKGQLSSGSSRFPHRHRSQHYSGQKDKQHTESKGSFSIQHTYHVDANDHDRTRKSQQYYLNAQHKTTKSKQHLRRRQRLLNYKQKGRGRVKPKRHFHLIVIHRKGGQVHHGTQNPSQDQGNSPSGKGIFRQYSNTEERLWFRGLSKEQASASGAQKGRTQGGSQTNYVLQTEELVANKQQNKQQRETQNSHRNKGHYQNVFEVREEHSSKLQTSLHPAHQHRLQHGYKDIFTTQNELLVYNKNQHQTKNLNQDQEHGQKAHKGSYQSSSTEERQPNHEENSVQKGVPKGSISIQTEEKIYGKSQNQVTIPSQDQEHGHKENKISYQSSSAEERRLNSGEKGIQKGVPKGSISIQTEEKIYGKSQNQVTIPSQDQEHGHKENKISYQSSSAEERRLNSGEKGIQKGVPKGSISIQTEEKIYGKSQNQVTIPSQDQEHGHKENKISYQSSSTEERRLNSGEKGIQRGVSKGSISIQTEEKIHGKSQNQVAIPSQDQEHGHKENKISYQSSSAEERQLNSGEKGIQKGVSKGSISIQTEEKIYGKSQNQVTIPSQDQEHGHKENKIAYQSSSTEERQLNYGGKSIQKDVSQSSLSFQTEKLVEGKSQIQTPNPNQGQWSGQNAKGNSGKSADREQDLLSHEQEGRYQQEFSGAHNTVNIEHEVAYDDLLTQQYNEDRNPVST.

Positions 1–23 (MKSIILFVLSLLLILEKQAAVMG) are cleaved as a signal peptide. Disordered regions lie at residues 25 to 62 (KGGSKGQLSSGSSRFPHRHRSQHYSGQKDKQHTESKGS), 131 to 156 (KGGQVHHGTQNPSQDQGNSPSGKGIF), and 276 to 678 (NLNQ…SGAH). Positions 50 to 59 (GQKDKQHTES) are enriched in basic and acidic residues. A compositionally biased stretch (polar residues) spans 137–151 (HGTQNPSQDQGNSPS). Positions 297-308 (TEERQPNHEENS) are enriched in basic and acidic residues. A compositionally biased stretch (polar residues) spans 329-339 (KSQNQVTIPSQ). Residues 340 to 349 (DQEHGHKENK) show a composition bias toward basic and acidic residues. The segment covering 389–399 (KSQNQVTIPSQ) has biased composition (polar residues). Basic and acidic residues predominate over residues 400–409 (DQEHGHKENK). Polar residues predominate over residues 449-459 (KSQNQVTIPSQ). The segment covering 460–469 (DQEHGHKENK) has biased composition (basic and acidic residues). A compositionally biased stretch (polar residues) spans 509-519 (KSQNQVAIPSQ). Basic and acidic residues predominate over residues 520-529 (DQEHGHKENK). A compositionally biased stretch (polar residues) spans 569-579 (KSQNQVTIPSQ). Over residues 580 to 589 (DQEHGHKENK) the composition is skewed to basic and acidic residues. Composition is skewed to polar residues over residues 611 to 622 (KDVSQSSLSFQT) and 630 to 653 (SQIQTPNPNQGQWSGQNAKGNSGK). Positions 654 to 670 (SADREQDLLSHEQEGRY) are enriched in basic and acidic residues.

The protein belongs to the semenogelin family. In terms of assembly, interacts with SERPINA5.

The protein localises to the secreted. Functionally, participates in the formation of a gel matrix (sperm coagulum) entrapping the accessory gland secretions and ejaculated spermatozoa. This Macaca mulatta (Rhesus macaque) protein is Semenogelin-2 (SEMG2).